A 769-amino-acid polypeptide reads, in one-letter code: Protein lethal(2)denticleless (769 aa).

6 WD repeats span residues 99-129 (CHFN…RLWE), 143-174 (GHTR…LIWD), 194-249 (GHTG…KVWD), 264-303 (RHKL…YCYN), 320-349 (NSTF…YIWN), and 362-393 (GHTV…KIWR). Positions 196-221 (TGGPGTPVSQRKQRTRTPKMAGGTTS) are disordered. At Thr-201 the chain carries Phosphothreonine. Phosphoserine is present on Ser-204. Disordered stretches follow at residues 448-467 (RLMD…TTKR), 476-562 (AGQE…HVYT), and 655-769 (SPRL…VGSD). At Thr-456 the chain carries Phosphothreonine. Ser-459 carries the phosphoserine modification. Over residues 503–518 (PSSQETACRHIQLQSI) the composition is skewed to polar residues. Ser-524 bears the Phosphoserine mark. Residues 524 to 533 (SPSKRQKENS) show a composition bias toward basic and acidic residues. The segment covering 546–562 (STPSHSPLSENVNHVYT) has biased composition (polar residues). Ser-655 carries the post-translational modification Phosphoserine. Over residues 657-666 (RLQSLRQSEC) the composition is skewed to polar residues. 3 positions are modified to phosphoserine: Ser-679, Ser-691, and Ser-711. Over residues 689-704 (AGSSSHSHSQSQPKTP) the composition is skewed to low complexity. Residues 705–714 (TSSRRNSETT) show a composition bias toward polar residues. Residues 728 to 743 (PAEETTTTNAAPSSSD) are compositionally biased toward low complexity. Over residues 758–769 (SMRTPTTAVGSD) the composition is skewed to polar residues.

Belongs to the WD repeat cdt2 family. Component of the DCX(DTL) E3 ubiquitin ligase complex, at least composed of Cul-4, pic/DDB1, l(2)dtl/CDT2 and Roc1a. As to expression, ubiquitously expressed during embryogenesis with no sign of tissue specificity in expression up to stage 17.

The protein localises to the cytoplasm. It participates in protein modification; protein ubiquitination. Functionally, substrate-specific adapter of a DCX (DDB1-CUL4-X-box) E3 ubiquitin-protein ligase complex required for cell cycle control. The DCX(DTL) complex, also named CRL4(CDT2) complex, mediates the polyubiquitination and subsequent degradation of E2f during S phase. E2f degradation is necessary to ensure proper development. Substrates require their interaction with PCNA for their polyubiquitination: substrates interact with PCNA via their PIP-box, leading to recruit the DCX(DTL) complex. The chain is Protein lethal(2)denticleless (l(2)dtl) from Drosophila melanogaster (Fruit fly).